The sequence spans 334 residues: Large ribosomal subunit protein uL3 (334 aa).

Positions M1–R10 are enriched in basic residues. Residues M1–R20 are disordered.

This sequence belongs to the universal ribosomal protein uL3 family. As to quaternary structure, part of the 50S ribosomal subunit. Forms a cluster with proteins L14 and L24e.

Its function is as follows. One of the primary rRNA binding proteins, it binds directly near the 3'-end of the 23S rRNA, where it nucleates assembly of the 50S subunit. The protein is Large ribosomal subunit protein uL3 of Methanococcus maripaludis (strain C7 / ATCC BAA-1331).